Consider the following 1085-residue polypeptide: Carbamoyl phosphate synthase large chain (1085 aa).

The segment at 1 to 399 is carboxyphosphate synthetic domain; the sequence is MPKRTDISNI…ALQKALCSLE (399 aa). ATP contacts are provided by Arg-127, Arg-167, Gly-174, Glu-206, Leu-208, Glu-213, Gly-239, Val-240, His-241, Gln-283, and Glu-297. The 196-residue stretch at 131–326 folds into the ATP-grasp 1 domain; the sequence is KEAMLKIGMD…IAKVATMLAV (196 aa). Positions 283, 297, and 299 each coordinate Mg(2+). Positions 283, 297, and 299 each coordinate Mn(2+). Positions 400-551 are oligomerization domain; the sequence is NNWLGFESLS…YAPNPLPPIG (152 aa). Positions 552–951 are carbamoyl phosphate synthetic domain; it reads NKQEKQEKKI…AFFKAQTACF (400 aa). Residues 678–871 enclose the ATP-grasp 2 domain; that stretch reads SLFLKELDIK…LAKVATRVMV (194 aa). ATP is bound by residues Arg-714, Lys-756, Leu-758, Glu-763, Gly-788, Ile-789, His-790, Ser-791, Gln-830, and Glu-842. Positions 830, 842, and 844 each coordinate Mg(2+). 3 residues coordinate Mn(2+): Gln-830, Glu-842, and Asn-844. Residues 952–1085 enclose the MGS-like domain; sequence NPIKNKGLIF…ELLALQDYLK (134 aa). The tract at residues 952 to 1085 is allosteric domain; the sequence is NPIKNKGLIF…ELLALQDYLK (134 aa).

It belongs to the CarB family. In terms of assembly, composed of two chains; the small (or glutamine) chain promotes the hydrolysis of glutamine to ammonia, which is used by the large (or ammonia) chain to synthesize carbamoyl phosphate. Tetramer of heterodimers (alpha,beta)4. It depends on Mg(2+) as a cofactor. Requires Mn(2+) as cofactor.

The catalysed reaction is hydrogencarbonate + L-glutamine + 2 ATP + H2O = carbamoyl phosphate + L-glutamate + 2 ADP + phosphate + 2 H(+). It catalyses the reaction hydrogencarbonate + NH4(+) + 2 ATP = carbamoyl phosphate + 2 ADP + phosphate + 2 H(+). It functions in the pathway amino-acid biosynthesis; L-arginine biosynthesis; carbamoyl phosphate from bicarbonate: step 1/1. The protein operates within pyrimidine metabolism; UMP biosynthesis via de novo pathway; (S)-dihydroorotate from bicarbonate: step 1/3. In terms of biological role, large subunit of the glutamine-dependent carbamoyl phosphate synthetase (CPSase). CPSase catalyzes the formation of carbamoyl phosphate from the ammonia moiety of glutamine, carbonate, and phosphate donated by ATP, constituting the first step of 2 biosynthetic pathways, one leading to arginine and/or urea and the other to pyrimidine nucleotides. The large subunit (synthetase) binds the substrates ammonia (free or transferred from glutamine from the small subunit), hydrogencarbonate and ATP and carries out an ATP-coupled ligase reaction, activating hydrogencarbonate by forming carboxy phosphate which reacts with ammonia to form carbamoyl phosphate. This chain is Carbamoyl phosphate synthase large chain, found in Helicobacter pylori (strain J99 / ATCC 700824) (Campylobacter pylori J99).